The primary structure comprises 529 residues: O-acetylstemmadenine oxidase (529 aa).

Residues 1–23 (MIKKVPIVLSIFCFLLLLSSSHG) form the signal peptide. An intrachain disulfide couples Cys-32 to Cys-92. N-linked (GlcNAc...) asparagine glycosylation is present at Asn-52. An FAD-binding PCMH-type domain is found at 70–244 (KSPKPLAIIT…VSWKVKLVKV (175 aa)). FAD-binding positions include 102 to 108 (IRSGGAD), Ser-113, 168 to 169 (VS), 173 to 177 (GIGGH), and Phe-183. A glycan (N-linked (GlcNAc...) asparagine) is linked at Asn-293. Residue Trp-465 participates in FAD binding.

It belongs to the oxygen-dependent FAD-linked oxidoreductase family. The cofactor is FAD. As to expression, expressed in leaf epidermis.

It localises to the endoplasmic reticulum. It is found in the vacuole. The protein resides in the vesicle. The catalysed reaction is O-acetyl-15alpha-stemmadenine + O2 = precondylocarpine acetate + H2O2. It functions in the pathway alkaloid biosynthesis. Functionally, component of the seco-iridoid and derivatives monoterpenoid indole alkaloids (MIAs, e.g. vinblastine, catharanthine, tabersonine, vincadifformine, vindoline, vincristine, quinine and strychnine) biosynthesis pathway. Converts O-acetylstemmadenine (OAS) to reactive acetylated intermediates, likely dihydroprecondylocarpine acetate. This Catharanthus roseus (Madagascar periwinkle) protein is O-acetylstemmadenine oxidase.